A 474-amino-acid polypeptide reads, in one-letter code: 6-phospho-beta-galactosidase (474 aa).

The D-galactose 6-phosphate site is built by Gln19, His116, Asn159, Glu160, and Asn297. Catalysis depends on Glu160, which acts as the Proton donor. Glu375 serves as the catalytic Nucleophile. D-galactose 6-phosphate is bound by residues Ser433, Trp434, Lys440, and Tyr442.

It belongs to the glycosyl hydrolase 1 family.

The catalysed reaction is a 6-phospho-beta-D-galactoside + H2O = D-galactose 6-phosphate + an alcohol. The protein operates within carbohydrate metabolism; lactose degradation; D-galactose 6-phosphate and beta-D-glucose from lactose 6-phosphate: step 1/1. The chain is 6-phospho-beta-galactosidase from Lacticaseibacillus rhamnosus (Lactobacillus rhamnosus).